Here is an 88-residue protein sequence, read N- to C-terminus: LYR motif-containing protein 2 (88 aa).

The N-terminal 19 residues, 1-19 (MATSRLPPATLTLKQFMRR), are a transit peptide targeting the mitochondrion.

The protein belongs to the complex I LYR family.

The protein localises to the mitochondrion. Involved in efficient integration of the N-module into mitochondrial respiratory chain complex I. The sequence is that of LYR motif-containing protein 2 (LYRM2) from Bos taurus (Bovine).